The chain runs to 437 residues: ATP-dependent RNA helicase RhlB (437 aa).

The short motif at 9-37 (QKFADLGLQPQVTEGLEKKGFEYCTPIQA) is the Q motif element. Residues 40 to 219 (LPVLLTGQDI…FEHMHNPEHV (180 aa)) enclose the Helicase ATP-binding domain. 53–60 (AQTGTGKT) contacts ATP. A DEAD box motif is present at residues 165-168 (DEAD). The Helicase C-terminal domain occupies 245–390 (ALLQTLIEEE…VSEYDASALI (146 aa)). The disordered stretch occupies residues 397 to 437 (IRMRAPRVQQRRTNTGGTRSGNRKPQGRRPRQPRQSAPKQS). Over residues 417 to 428 (GNRKPQGRRPRQ) the composition is skewed to basic residues.

Belongs to the DEAD box helicase family. RhlB subfamily. In terms of assembly, component of the RNA degradosome, which is a multiprotein complex involved in RNA processing and mRNA degradation.

The protein resides in the cytoplasm. The enzyme catalyses ATP + H2O = ADP + phosphate + H(+). Functionally, DEAD-box RNA helicase involved in RNA degradation. Has RNA-dependent ATPase activity and unwinds double-stranded RNA. In Vibrio parahaemolyticus serotype O3:K6 (strain RIMD 2210633), this protein is ATP-dependent RNA helicase RhlB.